The chain runs to 195 residues: Peptidyl-tRNA hydrolase (195 aa).

Tyr18 lines the tRNA pocket. His23 (proton acceptor) is an active-site residue. TRNA contacts are provided by Phe69, Asn71, and Asn117.

It belongs to the PTH family. As to quaternary structure, monomer.

It is found in the cytoplasm. It catalyses the reaction an N-acyl-L-alpha-aminoacyl-tRNA + H2O = an N-acyl-L-amino acid + a tRNA + H(+). Functionally, hydrolyzes ribosome-free peptidyl-tRNAs (with 1 or more amino acids incorporated), which drop off the ribosome during protein synthesis, or as a result of ribosome stalling. Catalyzes the release of premature peptidyl moieties from peptidyl-tRNA molecules trapped in stalled 50S ribosomal subunits, and thus maintains levels of free tRNAs and 50S ribosomes. The chain is Peptidyl-tRNA hydrolase from Hahella chejuensis (strain KCTC 2396).